A 566-amino-acid polypeptide reads, in one-letter code: Proline--tRNA ligase (566 aa).

This sequence belongs to the class-II aminoacyl-tRNA synthetase family. ProS type 1 subfamily. In terms of assembly, homodimer.

The protein resides in the cytoplasm. The catalysed reaction is tRNA(Pro) + L-proline + ATP = L-prolyl-tRNA(Pro) + AMP + diphosphate. Functionally, catalyzes the attachment of proline to tRNA(Pro) in a two-step reaction: proline is first activated by ATP to form Pro-AMP and then transferred to the acceptor end of tRNA(Pro). As ProRS can inadvertently accommodate and process non-cognate amino acids such as alanine and cysteine, to avoid such errors it has two additional distinct editing activities against alanine. One activity is designated as 'pretransfer' editing and involves the tRNA(Pro)-independent hydrolysis of activated Ala-AMP. The other activity is designated 'posttransfer' editing and involves deacylation of mischarged Ala-tRNA(Pro). The misacylated Cys-tRNA(Pro) is not edited by ProRS. The chain is Proline--tRNA ligase from Bacillus cereus (strain G9842).